The sequence spans 108 residues: Type III secretion system chaperone SseA (108 aa).

A coiled-coil region spans residues 69–97; the sequence is NQEAEKDLKKIVSLFKQLEVRLKQLNAQA.

Binds to SseB and SseD.

The protein localises to the cytoplasm. Functionally, functions as a type III secretion system (T3SS) chaperone, which is required for SseB and SseD accumulation and secretion. May have a direct role in secretion of SseB and SseD, or may facilitate their correct folding, for efficient secretion and function. Required for survival and replication within epithelial cells and macrophages. The chain is Type III secretion system chaperone SseA (sseA) from Salmonella typhimurium (strain LT2 / SGSC1412 / ATCC 700720).